A 453-amino-acid polypeptide reads, in one-letter code: Carbamoyl phosphate synthase arginine-specific small chain (453 aa).

Residues 1-33 (MFSRLAARLPKASALNGVAARQVRNLSQPAITG) constitute a mitochondrion transit peptide. Positions 26 to 50 (LSQPAITGSKGRNMPAREPRTTAAA) are disordered. L-glutamine-binding residues include Ser97, Gly280, and Gly282. One can recognise a Glutamine amidotransferase type-1 domain in the interval 233–420 (HVALIDCGVK…MENVELFKSN (188 aa)). Residue Cys309 is the Nucleophile of the active site. Leu310, Gln313, Asn351, Gly353, and Tyr354 together coordinate L-glutamine. Residues His393 and Glu395 contribute to the active site.

It belongs to the CarA family. Heterodimer composed of 2 chains; the small (or glutamine) chain promotes the hydrolysis of glutamine to ammonia, which is used by the large (or ammonia) chain to synthesize carbamoyl phosphate.

The protein resides in the mitochondrion matrix. It catalyses the reaction hydrogencarbonate + L-glutamine + 2 ATP + H2O = carbamoyl phosphate + L-glutamate + 2 ADP + phosphate + 2 H(+). It carries out the reaction L-glutamine + H2O = L-glutamate + NH4(+). The protein operates within amino-acid biosynthesis; L-arginine biosynthesis; carbamoyl phosphate from bicarbonate: step 1/1. In terms of biological role, small subunit of the arginine-specific carbamoyl phosphate synthase (CPSase). CPSase catalyzes the formation of carbamoyl phosphate from the ammonia moiety of glutamine, carbonate, and phosphate donated by ATP, the first step of the arginine biosynthetic pathway. The small subunit (glutamine amidotransferase) binds and cleaves glutamine to supply the large subunit with the substrate ammonia. This chain is Carbamoyl phosphate synthase arginine-specific small chain (arg-2), found in Neurospora crassa (strain ATCC 24698 / 74-OR23-1A / CBS 708.71 / DSM 1257 / FGSC 987).